The sequence spans 94 residues: Large ribosomal subunit protein uL23 (94 aa).

This sequence belongs to the universal ribosomal protein uL23 family. Part of the 50S ribosomal subunit. Contacts protein L29, and trigger factor when it is bound to the ribosome.

Its function is as follows. One of the early assembly proteins it binds 23S rRNA. One of the proteins that surrounds the polypeptide exit tunnel on the outside of the ribosome. Forms the main docking site for trigger factor binding to the ribosome. The chain is Large ribosomal subunit protein uL23 from Geobacter metallireducens (strain ATCC 53774 / DSM 7210 / GS-15).